A 354-amino-acid chain; its full sequence is Zinc finger protein-like 1 homolog (354 aa).

The B box-type; degenerate zinc-finger motif lies at 1–41 (MGICKCKKRSEDFCFNHKKFICDSCVVADHSICYIKSYVSW). The RING-type; atypical zinc finger occupies 52–103 (CGVCKGKFDVDDNDDSVRLLCYHLYHPECIDVYVAALPQNSSVESYPCPKCP). Disordered regions lie at residues 139 to 167 (KQNS…NGTH) and 187 to 225 (GIHH…PYGL). A compositionally biased stretch (low complexity) spans 196–205 (NNSNNNNIIN). The chain crosses the membrane as a helical span at residues 287 to 307 (YLIMITVAIIVFLILISKMGS). The segment at 326-354 (ININNDNNGGNGAINEETLNDQKIPNNGQ) is disordered.

The protein belongs to the ZFPL1 family.

Its subcellular location is the membrane. The protein is Zinc finger protein-like 1 homolog (zfpl1) of Dictyostelium discoideum (Social amoeba).